The chain runs to 364 residues: Fructose-bisphosphate aldolase C (364 aa).

At Y5 the chain carries Phosphotyrosine. Residues S36, S39, and S45 each carry the phosphoserine modification. Residue R56 coordinates substrate. K111 is modified (N6-acetyllysine). S132 is subject to Phosphoserine. Position 147 (K147) interacts with substrate. Residue E188 is the Proton acceptor of the active site. Residue K230 is the Schiff-base intermediate with dihydroxyacetone-P of the active site.

It belongs to the class I fructose-bisphosphate aldolase family. As to quaternary structure, homotetramer. Interacts with ATP6V1E1.

The catalysed reaction is beta-D-fructose 1,6-bisphosphate = D-glyceraldehyde 3-phosphate + dihydroxyacetone phosphate. It functions in the pathway carbohydrate degradation; glycolysis; D-glyceraldehyde 3-phosphate and glycerone phosphate from D-glucose: step 4/4. This Macaca fascicularis (Crab-eating macaque) protein is Fructose-bisphosphate aldolase C (ALDOC).